The primary structure comprises 428 residues: Palmitoyltransferase ZDHHC23-B (428 aa).

Residues 1-82 (MSIMKKRSSR…RVPWISGARQ (82 aa)) are Cytoplasmic-facing. Residues 83–99 (IDVSLIPPLILLPVFLH) traverse the membrane as a helical segment. Topologically, residues 100-105 (IAALHY) are lumenal. Residues 106–125 (LLGIIMLTAMPITVLWYYFF) traverse the membrane as a helical segment. At 126-132 (THRKKGR) the chain is on the cytoplasmic side. The chain crosses the membrane as a helical span at residues 133-153 (TLFFLGLALFSLFYMFYLFLT). The Lumenal segment spans residues 154–160 (QVVPRGE). The helical transmembrane segment at 161–181 (VTELQLAVVTAGVALTVIFLM) threads the bilayer. Residues 182-294 (LTKRGPGLVR…SCVGLANHRT (113 aa)) lie on the Cytoplasmic side of the membrane. Residues 250-300 (NWCAVCKVVRPQRAGHCRICGVCVLRLDHHCVWINSCVGLANHRTFLLTLL) form the DHHC domain. Residue C280 is the S-palmitoyl cysteine intermediate of the active site. The helical transmembrane segment at 295–315 (FLLTLLFFLLTSIYGISLVLA) threads the bilayer. At 316–350 (SVCPDQRVLTALFYCPDVYSQYSSALCFTCAWYSS) the chain is on the lumenal side. The chain crosses the membrane as a helical span at residues 351–371 (IVTGGLLHLLLLQILNISLNV). At 372–428 (TEREARLALREKSAQRRLWGLIVHTGHYSRGFWSNWTEFLTMTEDTQPAGHKTEDLV) the chain is on the cytoplasmic side.

The protein belongs to the DHHC palmitoyltransferase family.

Its subcellular location is the golgi apparatus membrane. The protein resides in the golgi apparatus. The protein localises to the trans-Golgi network membrane. It carries out the reaction L-cysteinyl-[protein] + hexadecanoyl-CoA = S-hexadecanoyl-L-cysteinyl-[protein] + CoA. Functionally, palmitoyltransferase that could catalyze the addition of palmitate onto various protein substrates and be involved in a variety of cellular processes. This chain is Palmitoyltransferase ZDHHC23-B, found in Danio rerio (Zebrafish).